The primary structure comprises 72 residues: NADH dehydrogenase [ubiquinone] 1 beta subcomplex subunit 3-A (72 aa).

A helical membrane pass occupies residues alanine 31 to glycine 48.

The protein belongs to the complex I NDUFB3 subunit family. In terms of assembly, complex I is composed of at least 49 different subunits.

It is found in the mitochondrion inner membrane. Functionally, accessory subunit of the mitochondrial membrane respiratory chain NADH dehydrogenase (Complex I), that is believed not to be involved in catalysis. Complex I functions in the transfer of electrons from NADH to the respiratory chain. The immediate electron acceptor for the enzyme is believed to be ubiquinone. The sequence is that of NADH dehydrogenase [ubiquinone] 1 beta subcomplex subunit 3-A from Arabidopsis thaliana (Mouse-ear cress).